The primary structure comprises 267 residues: Cysteine protease avirulence protein AvrPphB (267 aa).

A lipid anchor (N-myristoyl glycine; by host) is attached at Gly-63. Active-site residues include Cys-98, His-212, and Asp-227.

It belongs to the peptidase C58 family. In terms of assembly, in infected plant cells, the 28 kDa product interacts with PBS1. Autocleaved. This function is essential for myristoylation in infected plant cell and for eliciting the plant hypersensitive response. Post-translationally, myristoylation of 28 kDa product in infected plant cells; it mediates the localization to membranes.

The protein localises to the secreted. It localises to the host membrane. Its function is as follows. Cysteine protease avirulence protein, which is essential during infection of plant cells from cultivar-specific of beans and Arabidopsis thaliana. The autocleavage of the protein is required for virulence function. May act by affecting the plant defense system. In plants lacking R3 or RPS5 resistance genes, it probably impairs the plant defense system and leads to the bacteria multiplication. In contrast, in plants containing the R3 or RPS5 protein, it is unable to induce disease symptoms, explaining its avirulence name. The 7 kDa product is required for the type-III translocation from Pseudomonas strains to the plant, but are partially dispensable for effector recognition following in planta expression. In infected plants, it acts by cleaving the PBS1 protein, which leads to resistance or disease, depending on the presence or absence of RPS5, respectively. Targets the Arabidopsis kinases PBS1, BIK1, PBL1, PBL2, PBL3, PBL5, PBL7, PBL9 and PBL11 for cleavage in vitro. Can block recognition of AvrB avirulence factor by plant cells by cleaving Arabidopsis RIPK kinase and suppressing Arabidopsis RPM1 activation. Cannot block AvrRpm1-induced activation of RPM1. In Pseudomonas savastanoi pv. phaseolicola (Pseudomonas syringae pv. phaseolicola), this protein is Cysteine protease avirulence protein AvrPphB (avrPph3).